The chain runs to 192 residues: Transmembrane protein 11, mitochondrial (192 aa).

Residues 1 to 20 (MAAWGRRRLGPGSSGGSARE) are disordered. The next 2 helical transmembrane spans lie at 84–100 (TAVLAGTACLFTPLALP) and 107–124 (ISLPAGVLSLACCTLYGI).

The protein belongs to the TMEM11 family. Associates with the mitochondrial contact site and cristae organizing system (MICOS) complex, composed of at least MICOS10/MIC10, CHCHD3/MIC19, CHCHD6/MIC25, APOOL/MIC27, IMMT/MIC60, APOO/MIC23/MIC26 and QIL1/MIC13. This complex was also known under the names MINOS or MitOS complex. The MICOS complex associates with mitochondrial outer membrane proteins SAMM50, MTX1, MTX2 and DNAJC11, mitochondrial inner membrane protein TMEM11 and with HSPA9. Interacts with IMMT/MIC60.

It is found in the mitochondrion inner membrane. Its function is as follows. Plays a role in mitochondrial morphogenesis. In Homo sapiens (Human), this protein is Transmembrane protein 11, mitochondrial (TMEM11).